Here is a 250-residue protein sequence, read N- to C-terminus: Intermembrane phospholipid transport system lipoprotein MlaA (250 aa).

Residues 1–18 form the signal peptide; that stretch reads MKTKTILTALLSAIALTG. C19 carries N-palmitoyl cysteine lipidation. C19 is lipidated: S-diacylglycerol cysteine.

The protein belongs to the MlaA family.

Its subcellular location is the cell outer membrane. Functionally, involved in a phospholipid transport pathway that maintains lipid asymmetry in the outer membrane by retrograde trafficking of phospholipids from the outer membrane to the inner membrane. This is Intermembrane phospholipid transport system lipoprotein MlaA from Haemophilus influenzae (strain ATCC 51907 / DSM 11121 / KW20 / Rd).